The chain runs to 285 residues: Probable endonuclease 4 (285 aa).

Zn(2+)-binding residues include His-69, His-109, Glu-145, Asp-179, His-182, His-216, Asp-229, His-231, and Glu-261.

The protein belongs to the AP endonuclease 2 family. Zn(2+) is required as a cofactor.

The enzyme catalyses Endonucleolytic cleavage to 5'-phosphooligonucleotide end-products.. Functionally, endonuclease IV plays a role in DNA repair. It cleaves phosphodiester bonds at apurinic or apyrimidinic (AP) sites, generating a 3'-hydroxyl group and a 5'-terminal sugar phosphate. This is Probable endonuclease 4 from Salmonella arizonae (strain ATCC BAA-731 / CDC346-86 / RSK2980).